The primary structure comprises 374 residues: N-acetyldiaminopimelate deacetylase (374 aa).

Residue Asp-69 is part of the active site. Glu-128 (proton acceptor) is an active-site residue.

This sequence belongs to the peptidase M20A family. N-acetyldiaminopimelate deacetylase subfamily.

The enzyme catalyses N-acetyl-(2S,6S)-2,6-diaminopimelate + H2O = (2S,6S)-2,6-diaminopimelate + acetate. It participates in amino-acid biosynthesis; L-lysine biosynthesis via DAP pathway; LL-2,6-diaminopimelate from (S)-tetrahydrodipicolinate (acetylase route): step 3/3. Its function is as follows. Catalyzes the conversion of N-acetyl-diaminopimelate to diaminopimelate and acetate. This is N-acetyldiaminopimelate deacetylase from Bacillus velezensis (strain DSM 23117 / BGSC 10A6 / LMG 26770 / FZB42) (Bacillus amyloliquefaciens subsp. plantarum).